The sequence spans 100 residues: NADH-quinone oxidoreductase subunit K (100 aa).

A run of 3 helical transmembrane segments spans residues 4-24 (LQHG…CLVL), 28-48 (LLFM…AFVV), and 60-80 (IMYI…LALL).

This sequence belongs to the complex I subunit 4L family. NDH-1 is composed of 13 different subunits. Subunits NuoA, H, J, K, L, M, N constitute the membrane sector of the complex.

The protein localises to the cell inner membrane. The catalysed reaction is a quinone + NADH + 5 H(+)(in) = a quinol + NAD(+) + 4 H(+)(out). Functionally, NDH-1 shuttles electrons from NADH, via FMN and iron-sulfur (Fe-S) centers, to quinones in the respiratory chain. The immediate electron acceptor for the enzyme in this species is believed to be ubiquinone. Couples the redox reaction to proton translocation (for every two electrons transferred, four hydrogen ions are translocated across the cytoplasmic membrane), and thus conserves the redox energy in a proton gradient. The chain is NADH-quinone oxidoreductase subunit K from Proteus mirabilis (strain HI4320).